Here is a 631-residue protein sequence, read N- to C-terminus: DNA mismatch repair protein MutL (631 aa).

The protein belongs to the DNA mismatch repair MutL/HexB family.

Functionally, this protein is involved in the repair of mismatches in DNA. It is required for dam-dependent methyl-directed DNA mismatch repair. May act as a 'molecular matchmaker', a protein that promotes the formation of a stable complex between two or more DNA-binding proteins in an ATP-dependent manner without itself being part of a final effector complex. The protein is DNA mismatch repair protein MutL of Lactobacillus acidophilus (strain ATCC 700396 / NCK56 / N2 / NCFM).